A 324-amino-acid polypeptide reads, in one-letter code: Myoblast determination protein 1 homolog (324 aa).

Positions 125–146 (VDSQHEDTTTSTAGGAGVGGPR) are disordered. Positions 155 to 206 (DRRKAATMRERRRLRKVNEAFEVVKQRTCPNPNQRLPKVEILRSAIDYINNL) constitute a bHLH domain. Residues 251-272 (YNPENMFDDDDLTDSDDDRDHH) form a disordered region. Over residues 256–267 (MFDDDDLTDSDD) the composition is skewed to acidic residues.

In terms of assembly, efficient DNA binding requires dimerization with another bHLH protein. Body wall muscle cells; in clonal muscle precursors, in a set of early embryonic blastomeres (the ms-granddaughters), and in six glial-like cells called GLRS.

The protein localises to the nucleus. Involved in myogenesis, in cooperation with transcription factors unc-120 and hnd-1. Acts redundantly with fozi-1 to promote body wall muscle cell and coelomocyte specification in postembryonic mesoderm progenitors, probably through suppression of sem-2. The sequence is that of Myoblast determination protein 1 homolog from Caenorhabditis elegans.